The following is a 497-amino-acid chain: Putative endothelial lipase (497 aa).

An N-terminal signal peptide occupies residues 1–23 (MRACPFLLLLLLPLLLSLGRIAA). Cysteines 73 and 86 form a disulfide. Residues Asn89 and Asn145 are each glycosylated (N-linked (GlcNAc...) asparagine). Residue Ser178 is the Nucleophile of the active site. Residue Asp202 is the Charge relay system of the active site. Cys262 and Cys282 are disulfide-bonded. His284 (charge relay system) is an active-site residue. Intrachain disulfides connect Cys307-Cys326 and Cys318-Cys321. Residue 335–347 (KMRNKRNSKMYLK) coordinates heparin. One can recognise a PLAT domain in the interval 357-492 (FHYQLKIHVF…CLKMVKVEKH (136 aa)). Asn403 carries an N-linked (GlcNAc...) asparagine glycan.

It belongs to the AB hydrolase superfamily. Lipase family. In terms of assembly, head to tail homodimer. Expressed by the venom gland.

The protein resides in the secreted. The enzyme catalyses a triacylglycerol + H2O = a diacylglycerol + a fatty acid + H(+). With respect to regulation, inhibited by serum. Functionally, has phospholipase and triglyceride lipase activities. The protein is Putative endothelial lipase of Crotalus adamanteus (Eastern diamondback rattlesnake).